We begin with the raw amino-acid sequence, 245 residues long: Anti-Pycsar protein Apyc1 (245 aa).

The interval F19–H219 is beta-lactamase-like. Zn(2+) is bound by residues H61, H63, D65, H66, H145, D165, and H219.

Belongs to the anti-Pycsar protein Apyc1 family. As to quaternary structure, homodimer. It depends on Zn(2+) as a cofactor.

The catalysed reaction is 3',5'-cyclic CMP + H2O = CMP + H(+). It carries out the reaction 3',5'-cyclic UMP + H2O = UMP + H(+). Its function is as follows. Counteracts the endogenous Pycsar antiviral defense system. Phosphodiesterase that enables metal-dependent hydrolysis of host cyclic nucleotide Pycsar defense signals such as cCMP and cUMP. The polypeptide is Anti-Pycsar protein Apyc1 (Paenibacillus sp. (strain J14)).